The following is a 679-amino-acid chain: Sodium-dependent phosphate transporter 1 (679 aa).

6 helical membrane-spanning segments follow: residues 21 to 41 (YLWM…SVGA), 62 to 82 (ACIL…AKVS), 100 to 120 (GLLM…QLVA), 158 to 178 (IVMS…ILFF), 203 to 223 (ACTV…LLGF), and 230 to 250 (GTIL…WFFV). Residues S265 and S269 each carry the phosphoserine modification. 4 consecutive transmembrane segments (helical) span residues 511–531 (VSLL…FAHG), 558–578 (VATP…GLWV), 600–620 (FSIE…GLPI), and 650–670 (IFMA…AIMA). The tract at residues 550 to 558 (DTGDVSSKV) is a.

Belongs to the inorganic phosphate transporter (PiT) (TC 2.A.20) family. As to expression, ubiquitously expressed.

Its subcellular location is the cell membrane. The enzyme catalyses 2 Na(+)(out) + phosphate(out) = 2 Na(+)(in) + phosphate(in). In terms of biological role, sodium-phosphate symporter which preferentially transports the monovalent form of phosphate with a stoichiometry of two sodium ions per phosphate ion. May play a role in extracellular matrix and cartilage calcification as well as in vascular calcification. Essential for cell proliferation but this function is independent of its phosphate transporter activity. Functionally, (Microbial infection) May function as a retroviral receptor as it confers human cells susceptibility to infection to Gibbon Ape Leukemia Virus (GaLV), Simian sarcoma-associated virus (SSAV) and Feline leukemia virus subgroup B (FeLV-B) as well as 10A1 murine leukemia virus (10A1 MLV). This chain is Sodium-dependent phosphate transporter 1 (SLC20A1), found in Homo sapiens (Human).